We begin with the raw amino-acid sequence, 251 residues long: MTLTAESGPLAGSRTDVAGELRHVDKWYGNRHVLQDVSLQIPSGQIVALIGRSGSGKSTVLRVLAGLSHDHTGRRLVAGAPALAFQEPRLFPWRDVRTNVGYGLTRTRLPRAQVRRRAERALADVGLADHARAWPLTLSGGQAQRVSLARALVAEPRLLLLDEPFGALDALTRLSMHTLLLDLWRRHGFGVLLVTHDVDEAVALADRVLVLEDGRVVHELAIDPPRRTPGEPGAHTERYRAELLDRLGVRQ.

The ABC transporter domain occupies 19–238 (GELRHVDKWY…PGEPGAHTER (220 aa)). ATP is bound at residue 51-58 (GRSGSGKS).

This sequence belongs to the ABC transporter superfamily. Aliphatic sulfonates importer (TC 3.A.1.17.2) family. The complex is composed of two ATP-binding proteins (SsuB), two transmembrane proteins (SsuC) and a solute-binding protein (SsuA).

The protein resides in the cell membrane. It carries out the reaction ATP + H2O + aliphatic sulfonate-[sulfonate-binding protein]Side 1 = ADP + phosphate + aliphatic sulfonateSide 2 + [sulfonate-binding protein]Side 1.. Functionally, part of the ABC transporter complex SsuABC involved in aliphatic sulfonates import. Responsible for energy coupling to the transport system. The sequence is that of Aliphatic sulfonates import ATP-binding protein SsuB from Mycobacterium avium (strain 104).